The following is a 4059-amino-acid chain: Fibrocystin (4059 aa).

The N-terminal stretch at 1–18 is a signal peptide; the sequence is MMLAWLVSLLSMEVLLLA. Topologically, residues 19–3851 are extracellular; the sequence is KPYSSFQFEP…LPVASKERST (3833 aa). The 85-residue stretch at 25-109 folds into the IPT/TIG 1; atypical domain; that stretch reads QFEPAEGSLA…AGPYSLEMRS (85 aa). Residues Asn-55 and Asn-224 are each glycosylated (N-linked (GlcNAc...) asparagine). IPT/TIG domains lie at 135 to 230 and 257 to 333; these read PVLY…FSVF and PEIL…FEVG. The region spanning 323–483 is the PA14 domain; that stretch reads AGNRGLRFEV…TWLNPDVVNT (161 aa). Residues Asn-355, Asn-385, Asn-518, Asn-527, Asn-620, Asn-639, Asn-709, Asn-867, Asn-965, Asn-975, Asn-1082, Asn-1114, Asn-1133, Asn-1239, Asn-1273, Asn-1308, Asn-1319, Asn-1344, Asn-1373, Asn-1456, Asn-1471, Asn-1528, Asn-1613, Asn-1627, Asn-1694, Asn-1760, Asn-1775, Asn-1875, Asn-1879, Asn-1915, Asn-1955, Asn-2030, and Asn-2139 are each glycosylated (N-linked (GlcNAc...) asparagine). IPT/TIG domains follow at residues 945–997 and 1017–1100; these read LVHF…FMLV and PRLD…AFTY. Residues 1106–1190 enclose the IPT/TIG 6; atypical domain; the sequence is PVIVSLSRNR…IRSQGVDLYI (85 aa). Residues 1198–1266 form the IPT/TIG 7 domain; that stretch reads SVEPCSGSLL…RADVLTVLAS (69 aa). The IPT/TIG 8; atypical domain maps to 1297–1378; the sequence is PVVTAMWGEF…MGFANMSVVP (82 aa). The region spanning 1385–1466 is the IPT/TIG 9 domain; that stretch reads PQIIAIFPTH…ITVLVNGLTS (82 aa). IPT/TIG domains follow at residues 1482 to 1566 and 1569 to 1637; these read PIVD…RNFF and PQVL…IDVN. In terms of domain architecture, IPT/TIG 12; atypical spans 1654-1738; the sequence is PELLSVSRSQ…VLRATVTSVT (85 aa). Residues 1928 to 2049 form the G8 1 domain; sequence HSWFPQRVPH…PEVTVTYLQA (122 aa). PbH1 repeat units lie at residues 2244–2266 and 2287–2321; these read TWGLKVDSNVFYKIVGHALLLGS and EQGSTIRNNVIISVSAAEGLSGSEMLAPAGIYTFS. N-linked (GlcNAc...) asparagine glycosylation is present at Asn-2380. PbH1 repeat units follow at residues 2404–2426 and 2459–2481; these read SNNLHLKNFQVYACRDFGIDILE and RWELTISNTTFVNFDGNCVAIRT. Residues Asn-2466, Asn-2503, Asn-2529, Asn-2547, Asn-2581, Asn-2589, Asn-2627, Asn-2747, and Asn-2762 are each glycosylated (N-linked (GlcNAc...) asparagine). Positions 2741-2867 constitute a G8 2 domain; the sequence is KGWGGYNHTI…PKKSWVHLGA (127 aa). PbH1 repeat units follow at residues 3004 to 3026 and 3027 to 3049; these read SAGSWVISSTVHQSCSVGIHASS and SHGVILTDNVVFGTNGHGIDVEG. Asn-3051 carries N-linked (GlcNAc...) asparagine glycosylation. One copy of the PbH1 7 repeat lies at 3080–3102; it reads AEDIILHGNVVAGSERLGFHVGG. Residues Asn-3133 and Asn-3162 are each glycosylated (N-linked (GlcNAc...) asparagine). The PbH1 8 repeat unit spans residues 3188 to 3212; sequence TVQITLRNSVIVATSSSFDCIHDRK. 3 N-linked (GlcNAc...) asparagine glycosylation sites follow: Asn-3218, Asn-3719, and Asn-3831. Residues 3852-3872 traverse the membrane as a helical segment; it reads IILALSLCSVASWVALSCLVC. The segment at 3869-3886 is ciliary targeting sequence (CST); that stretch reads CLVCCWFKKSKTRKIKPE. At 3873–4059 the chain is on the cytoplasmic side; that stretch reads CWFKKSKTRK…LHTAPPETIQ (187 aa). Positions 3885 to 3898 are enriched in basic and acidic residues; sequence PEDISESQAKEQKK. Positions 3885–3915 are disordered; that stretch reads PEDISESQAKEQKKNTHNSSKPRGLQAKTAK. Residues 3946-3970 are nuclear localization signal (NLS); the sequence is KRKVSRLAVTEERTTTPAPKIPRIT. Residues 4015 to 4038 form a disordered region; sequence QERKQGQEPSQLDKGSDCTGLSQE.

Interacts with CAMLG. Interacts with PKD2. Interacts (via CST) with ARF4; this interaction allows an efficient PKHD1 trafficking to the cilium. Interacts (via CST) with RAB8A; this interaction controls trafficking through the endomembrane systeme and to the cilium. Interacts (via CST) with TULP3; this interaction allows PKHD1 trafficking to the cilium. Palmitoylated. Palmitoylation facilitates the trafficking to the cilia and membrane targeting. Post-translationally, N-glycosylated. In terms of processing, several proteolytic cleavages occur within the extracellular domain, whereas at least one cleavage occurs within the cytoplasmic domain. Cleaved by a probable proprotein convertase which produces an extracellular domain (polyductin extracellular domain, (PECD)) and a C-terminal fragment (polyductin transmembrane fragment (PTM)) which are tethered together by disulfide bonds. This extracellular domain (PECD) is then shed from the primary cilium by activation of a member of the ADAM metalloproteinase disintegrins family, resulting in concomitant release of an intra-cellular C-terminal fragment (ICD) via a gamma-secretase-dependent process. The proteolytic cleavage of the C-terminal intracellular fragment (ICD) is controlled by cytosolic calcium concentration and activation of PKC. In terms of tissue distribution, expressed in bile ducts and distal nephron segments but is absent from the proximal tubule. Expressed in pancreas and kidney but also in the liver. Expressed primarily in the distal tubule and thick ascending limb of the loop of Henle, and at low-level in the proximal tubule before renal development is complete at P0.

It is found in the cell membrane. Its subcellular location is the cytoplasm. The protein localises to the apical cell membrane. It localises to the cytoskeleton. The protein resides in the cilium basal body. It is found in the cell projection. Its subcellular location is the cilium. The protein localises to the spindle. It localises to the chromosome. The protein resides in the centromere. It is found in the nucleus. Its subcellular location is the secreted. The protein localises to the extracellular exosome. It localises to the endoplasmic reticulum. The protein resides in the golgi apparatus. Functionally, promotes ciliogenesis in renal epithelial cells and therefore participates in the tubules formation and/or ensures the maintenance of the architecture of the lumen of the kidney. Has an impact on cellular symmetry by ensuring correct bipolar cell division through the regulation of centrosome duplication and mitotic spindle assembly and by maintaining oriented cell division (OCD) during tubular elongation through planar cell polarity (PCP) pathway. During epithelial cell morphogenesis, it also regulates cell-cell and cell-matrix adhesion and participates in cell motility. Promotes cell-cell contact through the positive regulation of PTK2 kinase activity leading to either positive regulation of epithelial cell proliferation through the HRAS/RAF1 pathways, or negative regulation of apoptosis through the PDK1/AKT1 pathway. May act in collecting-duct and biliary differentiation. May participate in the regulation of the cholangiocytes proliferation and the CCN2 production in an CXCL8-dependent manner. The polypeptide is Fibrocystin (Mus musculus (Mouse)).